A 531-amino-acid chain; its full sequence is Probable calcium-binding mitochondrial carrier F17E5.2 (531 aa).

EF-hand domains lie at Glu-70 to Ile-105, Pro-106 to Ile-135, Ala-136 to Asn-171, and Leu-172 to Thr-207. Asp-83, Asp-85, Asp-87, Ser-89, and Asp-94 together coordinate Ca(2+). Ca(2+) contacts are provided by Asp-149, Asn-151, Asp-153, Glu-155, and Glu-160. Solcar repeat units lie at residues Gly-242–Trp-328, Leu-338–Met-424, and Pro-435–Gln-525. Helical transmembrane passes span Leu-248–Phe-265, Gly-303–Tyr-322, Ser-348–Met-361, Gly-399–Tyr-418, Leu-441–Leu-458, and Gly-500–Val-517.

It belongs to the mitochondrial carrier (TC 2.A.29) family.

It localises to the mitochondrion inner membrane. Functionally, calcium-dependent mitochondrial solute carrier. The chain is Probable calcium-binding mitochondrial carrier F17E5.2 from Caenorhabditis elegans.